A 296-amino-acid polypeptide reads, in one-letter code: Sulfotransferase 1E1 (296 aa).

Residue Lys-49–Trp-54 coordinates 3'-phosphoadenylyl sulfate. Residue Lys-107 to His-109 coordinates substrate. Catalysis depends on His-109, which acts as the Proton acceptor. 3'-phosphoadenylyl sulfate is bound by residues Arg-131, Ser-139, Tyr-194, Thr-228–Met-233, and Arg-258–Gly-260.

It belongs to the sulfotransferase 1 family. In terms of assembly, homodimer. The N-terminus is blocked. Adrenal gland and much less in liver. Detectable only during pregnancy in uterine.

The protein localises to the cytoplasm. Its subcellular location is the cytosol. It carries out the reaction estrone + 3'-phosphoadenylyl sulfate = estrone 3-sulfate + adenosine 3',5'-bisphosphate + H(+). It catalyses the reaction (24S)-hydroxycholesterol + 3'-phosphoadenylyl sulfate = (24S)-hydroxycholesterol 3-sulfate + adenosine 3',5'-bisphosphate + H(+). The catalysed reaction is 17beta-estradiol + 3'-phosphoadenylyl sulfate = 17beta-estradiol 3-sulfate + adenosine 3',5'-bisphosphate + H(+). The enzyme catalyses 3beta-hydroxyandrost-5-en-17-one + 3'-phosphoadenylyl sulfate = dehydroepiandrosterone 3-sulfate + adenosine 3',5'-bisphosphate + H(+). It carries out the reaction 4-ethylphenol + 3'-phosphoadenylyl sulfate = 4-ethylphenyl sulfate + adenosine 3',5'-bisphosphate + H(+). Its activity is regulated as follows. Inhibited by estradiol. Functionally, sulfotransferase that utilizes 3'-phospho-5'-adenylyl sulfate (PAPS) as sulfonate donor to catalyze the sulfate conjugation of estradiol and estrone. Is a key enzyme in estrogen homeostasis, the sulfation of estrogens leads to their inactivation. Also sulfates dehydroepiandrosterone (DHEA), pregnenolone, (24S)-hydroxycholesteroland xenobiotic compounds like ethinylestradiol, equalenin, diethyl stilbesterol and 1-naphthol at significantly lower efficiency. Does not sulfonate cortisol, testosterone and dopamine. May play a role in gut microbiota-host metabolic interaction. O-sulfonates 4-ethylphenol (4-EP), a dietary tyrosine-derived metabolite produced by gut bacteria. The product 4-EPS crosses the blood-brain barrier and may negatively regulate oligodendrocyte maturation and myelination, affecting the functional connectivity of different brain regions associated with the limbic system. This Cavia porcellus (Guinea pig) protein is Sulfotransferase 1E1 (SULT1E1).